Here is a 370-residue protein sequence, read N- to C-terminus: Natural killer cell receptor 2B4 (370 aa).

Positions 1–21 (MLGQVVTLILLLLLKVYQGKG) are cleaved as a signal peptide. Ig-like domains lie at 22–127 (CQGS…FVFE) and 131–215 (PDKV…LNLT). The Extracellular segment spans residues 22–229 (CQGSADHVVS…NAHQEFRFWP (208 aa)). N-linked (GlcNAc...) asparagine glycans are attached at residues Asn-71, Asn-77, Asn-89, Asn-164, Asn-181, Asn-192, Asn-200, and Asn-213. An intrachain disulfide couples Cys-157 to Cys-199. Residues 230 to 250 (FLVIIVILSALFLGTLACFCV) form a helical membrane-spanning segment. Topologically, residues 251–370 (WRRKRKEKQS…KELENFDVYS (120 aa)) are cytoplasmic. 4 consecutive short sequence motifs (ITSM) follow at residues 269–274 (TIYEDV), 295–300 (TIYSMI), 315–320 (TLYSLI), and 340–345 (TIYEVI). Tyr-271 carries the post-translational modification Phosphotyrosine. Tyr-297 carries the phosphotyrosine; by FYN modification. Residue Tyr-317 is modified to Phosphotyrosine. The interval 324 to 370 (RKSGSRKRNHSPSFNSTIYEVIGKSQPKAQNPARLSRKELENFDVYS) is disordered. Tyr-342 carries the phosphotyrosine; by FYN modification.

In terms of assembly, interacts with CD48. Interacts (via phosphorylated ITSM 1-4) with SH2D1A (via SH2 domain); SH2D1A probably mediates association with FYN. Interacts (via phosphorylated ITSM 3) with PTPN11/SHP-2, INPP5D/SHIP1, PTPN6/SHP-1 and CSK; binding of SH2D1A/SAP prevents association with PTPN11, PTPN6 and CSK; conflictingly a similar association has been described for phosphorylated ITSM 1 also including GRB2 and PLCG1. Interacts weakly (via phosphorylated ITSM 2) with PTPN11/SHP-2 and CSK. Interacts with SH2D1B. Interacts with PIK3R1; PI3K recruits SH2D1A. Interacts with MHC class I proteins; the interaction is proposed to prevent self-killing of NK cells. In terms of processing, N-linked glycosylation is essential for the binding to its ligand CD48. Also O-glycosylated, in contrast, O-linked sialylation has a negative impact on ligand binding. Phosphorylated by FYN and CSK on tyrosine residues following activation. Coligation with inhibitory receptors such as KIR2DL1 inhibits phosphorylation upon contact of NK cells with sensitive target cells. As to expression, expressed in spleen, PBL, followed by lung, liver, testis and small intestine. Expressed in all natural killer (NK) cells, monocytes and basophils, TCR-gamma/delta+ T-cells, monocytes, basophils, and on a subset of CD8(+) T-cells.

The protein localises to the membrane. It localises to the cell membrane. The protein resides in the membrane raft. Heterophilic receptor of the signaling lymphocytic activation molecule (SLAM) family; its ligand is CD48. SLAM receptors triggered by homo- or heterotypic cell-cell interactions are modulating the activation and differentiation of a wide variety of immune cells and thus are involved in the regulation and interconnection of both innate and adaptive immune response. Activities are controlled by presence or absence of small cytoplasmic adapter proteins, SH2D1A/SAP and/or SH2D1B/EAT-2. Acts as activating natural killer (NK) cell receptor. Activating function implicates association with SH2D1A and FYN. Downstreaming signaling involves predominantly VAV1, and, to a lesser degree, INPP5D/SHIP1 and CBL. Signal attenuation in the absence of SH2D1A is proposed to be dependent on INPP5D and to a lesser extent PTPN6/SHP-1 and PTPN11/SHP-2. Stimulates NK cell cytotoxicity, production of IFN-gamma and granule exocytosis. Optimal expansion and activation of NK cells seems to be dependent on the engagement of CD244 with CD48 expressed on neighboring NK cells. Acts as costimulator in NK activation by enhancing signals by other NK receptors such as NCR3 and NCR1. At early stages of NK cell differentiation may function as an inhibitory receptor possibly ensuring the self-tolerance of developing NK cells. Involved in the regulation of CD8(+) T-cell proliferation; expression on activated T-cells and binding to CD48 provides costimulatory-like function for neighboring T-cells. Inhibits inflammatory responses in dendritic cells (DCs). The polypeptide is Natural killer cell receptor 2B4 (CD244) (Homo sapiens (Human)).